The chain runs to 463 residues: Fumarate hydratase class II (463 aa).

Residues 98–100 (SGT), 129–132 (HPND), 139–141 (SSN), and threonine 187 contribute to the substrate site. The interval 121–141 (KKGGKSPVHPNDHVNKGQSSN) is disordered. Catalysis depends on histidine 188, which acts as the Proton donor/acceptor. Serine 318 is an active-site residue. Residues serine 319 and 324–326 (KVN) contribute to the substrate site.

It belongs to the class-II fumarase/aspartase family. Fumarase subfamily. As to quaternary structure, homotetramer.

It is found in the cytoplasm. It catalyses the reaction (S)-malate = fumarate + H2O. It participates in carbohydrate metabolism; tricarboxylic acid cycle; (S)-malate from fumarate: step 1/1. Its function is as follows. Involved in the TCA cycle. Catalyzes the stereospecific interconversion of fumarate to L-malate. This chain is Fumarate hydratase class II, found in Rickettsia conorii (strain ATCC VR-613 / Malish 7).